The sequence spans 271 residues: Probable L,D-transpeptidase 3 (271 aa).

Residues 127–270 enclose the L,D-TPase catalytic domain; it reads VVGVASISQH…VDIGDPVIVQ (144 aa). The Proton donor/acceptor role is filled by His-228. The active-site Nucleophile is Cys-246.

It functions in the pathway cell wall biogenesis; peptidoglycan biosynthesis. Is irreversibly inactivated by the beta-lactam carbapenems via the formation of a covalent adduct resulting from acylation of the catalytic Cys. Imipenem is the most efficient drug for in vitro LdtMt3/Rv1433 inactivation. Its function is as follows. Probable L,D-transpeptidase that may perform as-yet-unknown cross-linking reactions in M.tuberculosis. Is not able to generate 3-&gt;3 cross-links in peptidoglycan, using tetrapeptide stems as acyl donor substrates. May function in the anchoring of proteins to peptidoglycan. This chain is Probable L,D-transpeptidase 3, found in Mycobacterium tuberculosis (strain ATCC 25618 / H37Rv).